Reading from the N-terminus, the 146-residue chain is Hemoglobin subunit beta (146 aa).

At V1 the chain carries N-acetylvaline. The 145-residue stretch at 2–146 folds into the Globin domain; it reads HLTAEEKSLV…VANALAHKYH (145 aa). Position 44 is a phosphoserine (S44). K59 is subject to N6-acetyllysine. H63 provides a ligand contact to heme b. K82 carries the post-translational modification N6-acetyllysine. H92 contributes to the heme b binding site. C93 carries the S-nitrosocysteine modification. An N6-acetyllysine modification is found at K144.

Belongs to the globin family. As to quaternary structure, heterotetramer of two alpha chains and two beta chains. As to expression, red blood cells.

Functionally, involved in oxygen transport from the lung to the various peripheral tissues. This Canis latrans (Coyote) protein is Hemoglobin subunit beta (HBB).